A 291-amino-acid chain; its full sequence is Glycine--tRNA ligase alpha subunit (291 aa).

It belongs to the class-II aminoacyl-tRNA synthetase family. In terms of assembly, tetramer of two alpha and two beta subunits.

It is found in the cytoplasm. The catalysed reaction is tRNA(Gly) + glycine + ATP = glycyl-tRNA(Gly) + AMP + diphosphate. The protein is Glycine--tRNA ligase alpha subunit of Geobacter metallireducens (strain ATCC 53774 / DSM 7210 / GS-15).